We begin with the raw amino-acid sequence, 44 residues long: Cytochrome b559 subunit beta (44 aa).

The helical transmembrane segment at 19 to 35 (WLSVHALAVPTVFFIGA) threads the bilayer. Position 23 (His-23) interacts with heme.

It belongs to the PsbE/PsbF family. As to quaternary structure, heterodimer of an alpha subunit and a beta subunit. PSII is composed of 1 copy each of membrane proteins PsbA, PsbB, PsbC, PsbD, PsbE, PsbF, PsbH, PsbI, PsbJ, PsbK, PsbL, PsbM, PsbT, PsbX, PsbY, PsbZ, Psb30/Ycf12, peripheral proteins PsbO, CyanoQ (PsbQ), PsbU, PsbV and a large number of cofactors. It forms dimeric complexes. The cofactor is heme b.

The protein resides in the cellular thylakoid membrane. Its function is as follows. This b-type cytochrome is tightly associated with the reaction center of photosystem II (PSII). PSII is a light-driven water:plastoquinone oxidoreductase that uses light energy to abstract electrons from H(2)O, generating O(2) and a proton gradient subsequently used for ATP formation. It consists of a core antenna complex that captures photons, and an electron transfer chain that converts photonic excitation into a charge separation. The polypeptide is Cytochrome b559 subunit beta (Rippkaea orientalis (strain PCC 8801 / RF-1) (Cyanothece sp. (strain PCC 8801))).